The sequence spans 369 residues: Protein RecA (369 aa).

66–73 (GPESSGKT) is an ATP binding site. Residues 328–369 (GIDAESLEEKEDPEKVKEQRAKKAAPGEEKPAEPASPEKTDK) form a disordered region. The segment covering 339–369 (DPEKVKEQRAKKAAPGEEKPAEPASPEKTDK) has biased composition (basic and acidic residues).

This sequence belongs to the RecA family.

The protein localises to the cytoplasm. In terms of biological role, can catalyze the hydrolysis of ATP in the presence of single-stranded DNA, the ATP-dependent uptake of single-stranded DNA by duplex DNA, and the ATP-dependent hybridization of homologous single-stranded DNAs. It interacts with LexA causing its activation and leading to its autocatalytic cleavage. The sequence is that of Protein RecA from Lactobacillus delbrueckii subsp. bulgaricus (strain ATCC BAA-365 / Lb-18).